A 241-amino-acid chain; its full sequence is Large ribosomal subunit protein uL13c (241 aa).

Residues 1 to 50 constitute a chloroplast transit peptide; sequence MAVLCSSSTVILSSSSVKSSGSERKSPFLGFSLTAISKPSVRVGIYANSK.

This sequence belongs to the universal ribosomal protein uL13 family. As to quaternary structure, part of the 50S ribosomal subunit.

It localises to the plastid. The protein resides in the chloroplast. The sequence is that of Large ribosomal subunit protein uL13c (RPL13) from Arabidopsis thaliana (Mouse-ear cress).